The primary structure comprises 60 residues: Large ribosomal subunit protein bL32 (60 aa).

A compositionally biased stretch (basic residues) spans 1 to 23 (MAKHPVPKKKTSKSKRDMRRSHH). The tract at residues 1-26 (MAKHPVPKKKTSKSKRDMRRSHHALV) is disordered.

The protein belongs to the bacterial ribosomal protein bL32 family.

The chain is Large ribosomal subunit protein bL32 from Deinococcus geothermalis (strain DSM 11300 / CIP 105573 / AG-3a).